Here is a 593-residue protein sequence, read N- to C-terminus: MERSKSALAHSSSYGQACTQCYKAKCRCVRTPSGDTCERCIRLKKRCEPSESVRRRNAQSTQTAKVSDRRIARLEDKMESLLSAMQSFIGTTASSASSANVIQPQQLNCDGLPSSTSYSNSSLVTPASSTLGFNEGQTFAPDSLTTVSPNSNQNAIFLSQPYVPSTPAPSPNHADERLHFFRTRMLPSFPFLDLTPDMTSWYLRQNRPFLFQAIHTVTTFSTQERLTQVEELKRLIFTSALLKVQSNIDLLLGLLTYLAWSTDPFLGRADLVSRLMMLAISLVISSHLGRQDALRWTPQMEEALRVLTISEACPSDRLFVAQVRLQLLKQRSDEARQQDEARTGTAPTAASAPRLLYLKTLRRELQELRASFPPDLHQIDVLNTHAQYVELYINQLAYSISQDSLPLDLAGRMGTGSQLGFQRLECLWQSVENIKSWLDNFYKIPCSKLVGQPFHFWSQMILTITLLKYLTTLKDPDWDCQAVRNTVHLISTMDCMLQKLDLSSKEPELQCNDHLLKFLSKLLSRCRVWAEARWNIASQMQDGDTRQCRSANPDTNSHNYYIPDLDQMVFMQSMDLGDDQWFENVLGMPTMFY.

The zn(2)-C6 fungal-type DNA-binding region spans 18 to 47 (CTQCYKAKCRCVRTPSGDTCERCIRLKKRC).

It is found in the nucleus. Its function is as follows. Transcriptional regulator that regulates both the azasperpyranone A biosynthesis clusters A and B. Specifically up-regulates the expression of the cluster A and B specific transcription factors ATEG_03638 and ATEG_07666, which in turn activate the expression of their respective clusters. In Aspergillus terreus (strain NIH 2624 / FGSC A1156), this protein is Transcription factor ATEG_07667.